The following is a 632-amino-acid chain: METPAAAAPAGSLFPSFLLLACGTLVAALLGAAHRLGLFYQLLHKVDKASVRHGGENVAAVLRAHGVRFIFTLVGGHISPLLVACEKLGIRVVDTRHEVTAVFAADAMARLSGTVGVAAVTAGPGLTNTVTAVKNAQMAQSPILLLGGAASTLLQNRGALQAVDQLSLFRPLCKFCVSVRRVRDIVPTLRAAMAAAQSGTPGPVFVELPVDVLYPYFMVQKEMVPAKPPKGLVGRVVSWYLENYLANLFAGAWEPQPEGPLPLDIPQASPQQVQRCVEILSRAKRPLMVLGSQALLTPTSADKLRAAVETLGVPCFLGGMARGLLGRNHPLHIRENRSAALKKADVIVLAGTVCDFRLSYGRVLSHSSKIIIVNRNREEMLLNSDIFWKPQEAVQGDVGSFVLKLVEGLQGQTWAPDWVEELREADRQKEQTFREKAAMPVAQHLNPVQVLQLVEETLPDNSILVVDGGDFVGTAAHLVQPRGPLRWLDPGAFGTLGVGAGFALGAKLCRPDAEVWCLFGDGAFGYSLIEFDTFVRHKIPVMALVGNDAGWTQISREQVPSLGSNVACGLAYTDYHKAAMGLGARGLLLSRENEDQVVKVLHDAQQQCRDGHPVVVNILIGRTDFRDGSIAV.

The chain crosses the membrane as a helical span at residues 13–33 (LFPSFLLLACGTLVAALLGAA). Glutamate 98 contacts thiamine diphosphate. Residues 470-550 (DFVGTAAHLV…VMALVGNDAG (81 aa)) form a thiamine pyrophosphate binding region. Aspartate 521 and asparagine 547 together coordinate Mg(2+).

Belongs to the TPP enzyme family. Mg(2+) is required as a cofactor. Requires thiamine diphosphate as cofactor. In terms of tissue distribution, expressed in all tissues tested, with highest expression in heart, pancreas and placenta.

Its subcellular location is the endoplasmic reticulum membrane. The enzyme catalyses 2-hydroxyoctadecanoyl-CoA = heptadecanal + formyl-CoA. It carries out the reaction (2R)-hydroxyhexadecanoyl-CoA = pentadecanal + formyl-CoA. Functionally, endoplasmic reticulum 2-OH acyl-CoA lyase involved in the cleavage (C1 removal) reaction in the fatty acid alpha-oxydation in a thiamine pyrophosphate (TPP)-dependent manner. Involved in the phytosphingosine degradation pathway. This chain is 2-hydroxyacyl-CoA lyase 2, found in Homo sapiens (Human).